The chain runs to 122 residues: UPF0482 protein Spro_2288 (122 aa).

Positions 1–31 (MKTLSTQRLLRGMLPVAMLMLMGAWQAPALA) are cleaved as a signal peptide. The interval 46–71 (SNSGAMSTEAARQSKQQFNDTKSLRN) is disordered.

The protein belongs to the UPF0482 family.

The chain is UPF0482 protein Spro_2288 from Serratia proteamaculans (strain 568).